A 407-amino-acid chain; its full sequence is uncharacterized protein (407 aa).

Disordered regions lie at residues 73-93 (SPHS…VHGG) and 116-202 (SGSI…IKPS). 5 tandem repeats follow at residues 112-116 (GSIRS), 117-121 (GSIRS), 122-126 (GSIRN), 127-131 (GSIRS), and 132-136 (GSVRD). Residues 112 to 136 (GSIRSGSIRSGSIRNGSIRSGSVRD) form a 5 X 5 AA tandem repeats of G-[S]-[IV]-R-[DNS] region. Over residues 116-132 (SGSIRSGSIRNGSIRSG) the composition is skewed to low complexity. Basic and acidic residues predominate over residues 187–202 (NHYAESEYSEKSIKPS).

It belongs to the asfivirus B407L family.

This is an uncharacterized protein from Ornithodoros (relapsing fever ticks).